The sequence spans 535 residues: CTP synthase (535 aa).

The segment at 1 to 267 is amidoligase domain; it reads MTKYIFVTGG…DQIVCDHLKL (267 aa). Ser-13 contacts CTP. Residue Ser-13 coordinates UTP. Position 14–19 (14–19) interacts with ATP; sequence SLGKGI. Tyr-54 is an L-glutamine binding site. ATP is bound at residue Asp-71. Residues Asp-71 and Glu-141 each coordinate Mg(2+). CTP-binding positions include 148–150, 188–193, and Lys-224; these read DIE and KTKPTQ. Residues 188 to 193 and Lys-224 contribute to the UTP site; that span reads KTKPTQ. 240–242 is an ATP binding site; sequence RDA. The region spanning 292-534 is the Glutamine amidotransferase type-1 domain; the sequence is KIALVGKYVE…VRASITNKES (243 aa). Gly-354 provides a ligand contact to L-glutamine. Cys-381 serves as the catalytic Nucleophile; for glutamine hydrolysis. Residues 382–385, Glu-405, and Arg-462 contribute to the L-glutamine site; that span reads LGMQ. Active-site residues include His-507 and Glu-509.

This sequence belongs to the CTP synthase family. As to quaternary structure, homotetramer.

It carries out the reaction UTP + L-glutamine + ATP + H2O = CTP + L-glutamate + ADP + phosphate + 2 H(+). It catalyses the reaction L-glutamine + H2O = L-glutamate + NH4(+). The enzyme catalyses UTP + NH4(+) + ATP = CTP + ADP + phosphate + 2 H(+). Its pathway is pyrimidine metabolism; CTP biosynthesis via de novo pathway; CTP from UDP: step 2/2. Allosterically activated by GTP, when glutamine is the substrate; GTP has no effect on the reaction when ammonia is the substrate. The allosteric effector GTP functions by stabilizing the protein conformation that binds the tetrahedral intermediate(s) formed during glutamine hydrolysis. Inhibited by the product CTP, via allosteric rather than competitive inhibition. Catalyzes the ATP-dependent amination of UTP to CTP with either L-glutamine or ammonia as the source of nitrogen. Regulates intracellular CTP levels through interactions with the four ribonucleotide triphosphates. The polypeptide is CTP synthase (Bacillus cereus (strain G9842)).